The following is a 554-amino-acid chain: U3 small nucleolar RNA-associated protein 7 (554 aa).

Basic residues predominate over residues 1 to 12 (MGHKKNGHRRQI). Residues 1–39 (MGHKKNGHRRQIKERENQNKFERSTYTNNAKNNHTQTKD) form a disordered region. Over residues 13 to 23 (KERENQNKFER) the composition is skewed to basic and acidic residues. Positions 24–35 (STYTNNAKNNHT) are enriched in polar residues. WD repeat units follow at residues 108 to 149 (LKEF…AELF), 230 to 269 (TKAG…PLVK), 272 to 311 (SARG…QLHS), and 314 to 351 (SLPT…SGDS). The interval 475–496 (NKAKTNSDIPDVKPDVKGKNSG) is disordered.

In terms of assembly, interacts with snoRNA U3. Interacts with MPP10. Component of the ribosomal small subunit (SSU) processome composed of at least 40 protein subunits and snoRNA U3.

The protein resides in the nucleus. It localises to the nucleolus. In terms of biological role, involved in nucleolar processing of pre-18S ribosomal RNA. The protein is U3 small nucleolar RNA-associated protein 7 (UTP7) of Saccharomyces cerevisiae (strain ATCC 204508 / S288c) (Baker's yeast).